The primary structure comprises 428 residues: 3-phosphoshikimate 1-carboxyvinyltransferase (428 aa).

3-phosphoshikimate-binding residues include Lys-23, Ser-24, and Arg-28. Position 23 (Lys-23) interacts with phosphoenolpyruvate. Phosphoenolpyruvate-binding residues include Gly-97 and Arg-125. 3-phosphoshikimate is bound by residues Ser-170, Ser-171, Gln-172, Ser-198, Asp-314, Asn-337, and Lys-341. Gln-172 provides a ligand contact to phosphoenolpyruvate. The active-site Proton acceptor is Asp-314. Phosphoenolpyruvate is bound by residues Arg-345, Arg-387, and Lys-412.

Belongs to the EPSP synthase family. Monomer.

The protein resides in the cytoplasm. The catalysed reaction is 3-phosphoshikimate + phosphoenolpyruvate = 5-O-(1-carboxyvinyl)-3-phosphoshikimate + phosphate. Its pathway is metabolic intermediate biosynthesis; chorismate biosynthesis; chorismate from D-erythrose 4-phosphate and phosphoenolpyruvate: step 6/7. Its function is as follows. Catalyzes the transfer of the enolpyruvyl moiety of phosphoenolpyruvate (PEP) to the 5-hydroxyl of shikimate-3-phosphate (S3P) to produce enolpyruvyl shikimate-3-phosphate and inorganic phosphate. In Buchnera aphidicola subsp. Schizaphis graminum (strain Sg), this protein is 3-phosphoshikimate 1-carboxyvinyltransferase.